A 66-amino-acid polypeptide reads, in one-letter code: Probable Sec-independent protein translocase protein TatE (66 aa).

The helical transmembrane segment at 1 to 21 (MEGISITKLLVIAVLIVLLFG) threads the bilayer. The tract at residues 46–66 (ETPAAKKSDGAEAAPRVENKE) is disordered.

This sequence belongs to the TatA/E family. TatE subfamily.

It localises to the cell inner membrane. Part of the twin-arginine translocation (Tat) system that transports large folded proteins containing a characteristic twin-arginine motif in their signal peptide across membranes. TatE shares overlapping functions with TatA. This chain is Probable Sec-independent protein translocase protein TatE, found in Edwardsiella piscicida.